A 369-amino-acid polypeptide reads, in one-letter code: Flagellar P-ring protein (369 aa).

An N-terminal signal peptide occupies residues 1 to 23 (MIKQFAVSLLLVLLTLVTTTASA).

Belongs to the FlgI family. As to quaternary structure, the basal body constitutes a major portion of the flagellar organelle and consists of four rings (L,P,S, and M) mounted on a central rod.

The protein resides in the periplasm. Its subcellular location is the bacterial flagellum basal body. Assembles around the rod to form the L-ring and probably protects the motor/basal body from shearing forces during rotation. This Photorhabdus laumondii subsp. laumondii (strain DSM 15139 / CIP 105565 / TT01) (Photorhabdus luminescens subsp. laumondii) protein is Flagellar P-ring protein.